Here is a 964-residue protein sequence, read N- to C-terminus: Siderophore exporter MmpL5 (964 aa).

A run of 12 helical transmembrane segments spans residues 31–51 (FAVP…VTVP), 203–223 (SLQV…LLVY), 230–250 (AIML…VAFL), 255–275 (IIGL…AAAT), 302–322 (MFGG…GATF), 340–360 (AIGM…IIAV), 389–409 (WPGP…LTLP), 773–793 (TYDL…IMLI), 803–823 (VIVG…VLIW), 826–846 (ILGI…LLAV), 880–900 (VVTA…VSEL), and 923–943 (SFMT…PQVV).

Belongs to the resistance-nodulation-cell division (RND) (TC 2.A.6) family. MmpL subfamily. Interacts with MmpS5.

It localises to the cell inner membrane. Its function is as follows. Part of an export system, which is required for biosynthesis and secretion of siderophores. This is Siderophore exporter MmpL5 (mmpL5) from Mycobacterium tuberculosis (strain CDC 1551 / Oshkosh).